The following is a 415-amino-acid chain: Probable glucuronosyltransferase Os03g0287800 (415 aa).

Residues 1–25 (MGSSTDHGGAGGRGKKGSGSQLWKK) lie on the Cytoplasmic side of the membrane. Residues 26–43 (ALLHSSLCFVMGFFTGFA) traverse the membrane as a helical; Signal-anchor for type II membrane protein segment. Residues 44 to 415 (PSSVSDWTSA…GGRFLSGDFC (372 aa)) are Lumenal-facing. N-linked (GlcNAc...) asparagine glycosylation is found at N78, N165, N257, and N287.

Belongs to the glycosyltransferase 43 family.

The protein localises to the golgi apparatus membrane. Involved in the synthesis of glucuronoxylan hemicellulose in secondary cell walls. This is Probable glucuronosyltransferase Os03g0287800 from Oryza sativa subsp. japonica (Rice).